The sequence spans 430 residues: Phosphomethylpyrimidine synthase (430 aa).

Substrate is bound by residues Asn67, Met96, Tyr125, His161, 183 to 185, 224 to 227, and Glu263; these read SRG and DALR. His267 contacts Zn(2+). Residue Tyr290 coordinates substrate. His331 is a binding site for Zn(2+). Cys406, Cys409, and Cys413 together coordinate [4Fe-4S] cluster.

It belongs to the ThiC family. As to quaternary structure, homodimer. [4Fe-4S] cluster serves as cofactor.

It catalyses the reaction 5-amino-1-(5-phospho-beta-D-ribosyl)imidazole + S-adenosyl-L-methionine = 4-amino-2-methyl-5-(phosphooxymethyl)pyrimidine + CO + 5'-deoxyadenosine + formate + L-methionine + 3 H(+). It participates in cofactor biosynthesis; thiamine diphosphate biosynthesis. Catalyzes the synthesis of the hydroxymethylpyrimidine phosphate (HMP-P) moiety of thiamine from aminoimidazole ribotide (AIR) in a radical S-adenosyl-L-methionine (SAM)-dependent reaction. The polypeptide is Phosphomethylpyrimidine synthase (Campylobacter jejuni subsp. jejuni serotype O:6 (strain 81116 / NCTC 11828)).